We begin with the raw amino-acid sequence, 655 residues long: Probable alpha-galactosidase D (655 aa).

The signal sequence occupies residues 1-16 (MASVIALSLLLPAAFA). Residues N87 and N93 are each glycosylated (N-linked (GlcNAc...) asparagine). A disulfide bridge connects residues C126 and C153. The Nucleophile role is filled by D151. 196–200 (EWGID) is a binding site for substrate. The active-site Proton donor is D218. N-linked (GlcNAc...) asparagine glycans are attached at residues N432, N482, N502, N540, and N579.

It belongs to the glycosyl hydrolase 27 family.

Its subcellular location is the secreted. It carries out the reaction Hydrolysis of terminal, non-reducing alpha-D-galactose residues in alpha-D-galactosides, including galactose oligosaccharides, galactomannans and galactolipids.. Hydrolyzes a variety of simple alpha-D-galactoside as well as more complex molecules such as oligosaccharides and polysaccharides. The chain is Probable alpha-galactosidase D (aglD) from Aspergillus terreus (strain NIH 2624 / FGSC A1156).